The sequence spans 508 residues: Lysine-specific permease LysP (508 aa).

Helical transmembrane passes span 43–63 (SMIA…GDVI), 66–86 (AGPF…YFLM), 112–132 (PAFG…TVAV), 144–164 (WLPD…VFSI), 184–204 (ITVV…IMGG), 219–239 (FVGG…LLVA), 270–290 (IFWR…AIIP), 314–334 (VGFS…VVSA), 367–387 (IPFI…LTSI), 393–413 (FTLL…GIAI), 436–456 (AKLF…VTLG), and 467–487 (WVQG…YLGY).

This sequence belongs to the amino acid-polyamine-organocation (APC) superfamily. Amino acid transporter (AAT) (TC 2.A.3.1) family.

It is found in the cell membrane. It catalyses the reaction L-lysine(out) + H(+)(out) = L-lysine(in) + H(+)(in). In terms of biological role, permease involved in lysine uptake. This Lactococcus lactis subsp. cremoris (strain MG1363) protein is Lysine-specific permease LysP.